The primary structure comprises 269 residues: Glutamate racemase (269 aa).

Substrate-binding positions include 7–8 (DS) and 39–40 (YG). Catalysis depends on Cys70, which acts as the Proton donor/acceptor. 71–72 (NT) contributes to the substrate binding site. The active-site Proton donor/acceptor is the Cys194. A substrate-binding site is contributed by 195 to 196 (TH).

This sequence belongs to the aspartate/glutamate racemases family.

The enzyme catalyses L-glutamate = D-glutamate. The protein operates within cell wall biogenesis; peptidoglycan biosynthesis. In terms of biological role, provides the (R)-glutamate required for cell wall biosynthesis. The chain is Glutamate racemase from Ruegeria sp. (strain TM1040) (Silicibacter sp.).